A 272-amino-acid chain; its full sequence is Undecaprenyl-diphosphatase (272 aa).

7 helical membrane passes run 42-62 (FGLS…VVFF), 92-112 (YLVL…EDFF), 120-140 (WVVV…EAVG), 149-169 (MGFA…VPGV), 194-214 (FLMS…EVLA), 224-244 (MFAV…RFFI), and 252-272 (LRAF…LLLL).

It belongs to the UppP family.

It localises to the cell membrane. The catalysed reaction is di-trans,octa-cis-undecaprenyl diphosphate + H2O = di-trans,octa-cis-undecaprenyl phosphate + phosphate + H(+). In terms of biological role, catalyzes the dephosphorylation of undecaprenyl diphosphate (UPP). Confers resistance to bacitracin. The polypeptide is Undecaprenyl-diphosphatase (Rubrobacter xylanophilus (strain DSM 9941 / JCM 11954 / NBRC 16129 / PRD-1)).